The following is a 61-amino-acid chain: Large ribosomal subunit protein uL30 (61 aa).

Belongs to the universal ribosomal protein uL30 family. Part of the 50S ribosomal subunit.

The sequence is that of Large ribosomal subunit protein uL30 from Treponema denticola (strain ATCC 35405 / DSM 14222 / CIP 103919 / JCM 8153 / KCTC 15104).